The following is a 390-amino-acid chain: Phosphopentomutase (390 aa).

Residues aspartate 12, aspartate 285, histidine 290, aspartate 326, histidine 327, and histidine 338 each coordinate Mn(2+).

This sequence belongs to the phosphopentomutase family. It depends on Mn(2+) as a cofactor.

The protein resides in the cytoplasm. The catalysed reaction is 2-deoxy-alpha-D-ribose 1-phosphate = 2-deoxy-D-ribose 5-phosphate. It catalyses the reaction alpha-D-ribose 1-phosphate = D-ribose 5-phosphate. It participates in carbohydrate degradation; 2-deoxy-D-ribose 1-phosphate degradation; D-glyceraldehyde 3-phosphate and acetaldehyde from 2-deoxy-alpha-D-ribose 1-phosphate: step 1/2. In terms of biological role, isomerase that catalyzes the conversion of deoxy-ribose 1-phosphate (dRib-1-P) and ribose 1-phosphate (Rib-1-P) to deoxy-ribose 5-phosphate (dRib-5-P) and ribose 5-phosphate (Rib-5-P), respectively. This is Phosphopentomutase from Brevibacillus brevis (strain 47 / JCM 6285 / NBRC 100599).